Reading from the N-terminus, the 275-residue chain is MAIKTYKPTTPSRRYMTNLDSGDITAKASVRALLKNLPRSAGRNSNGRITSRHREAGAKKLYRIIDFKRNKFGIEGTVATIEYDPYRNCRICLVNYVDGDRRYILQPKGLNVGDKIMSAESGLDIKTGNTMKLKNIPVGTLVHNIELSPGHGGQIARSAGGYAQIMGRDGKYVSLRLPSGEMRYVLGECLATIGTVGNEDFSNIVIGKAGRSRHLGIRPQTRGSAMNPIDHPHGGGEGKTNSGRHPVSPWGMPTKGYKTRKKKASDKLIISKRKK.

A disordered region spans residues 218–275 (RPQTRGSAMNPIDHPHGGGEGKTNSGRHPVSPWGMPTKGYKTRKKKASDKLIISKRKK). Basic residues predominate over residues 257–275 (YKTRKKKASDKLIISKRKK).

The protein belongs to the universal ribosomal protein uL2 family. Part of the 50S ribosomal subunit. Forms a bridge to the 30S subunit in the 70S ribosome.

In terms of biological role, one of the primary rRNA binding proteins. Required for association of the 30S and 50S subunits to form the 70S ribosome, for tRNA binding and peptide bond formation. It has been suggested to have peptidyltransferase activity; this is somewhat controversial. Makes several contacts with the 16S rRNA in the 70S ribosome. This Sulfurovum sp. (strain NBC37-1) protein is Large ribosomal subunit protein uL2.